Here is a 267-residue protein sequence, read N- to C-terminus: Corrinoid adenosyltransferase EutT (267 aa).

Cys-80 and Cys-83 together coordinate a divalent metal cation.

The protein belongs to the Cob(I)alamin adenosyltransferase family. EutT subfamily. As to quaternary structure, homodimer. The cofactor is a divalent metal cation.

It localises to the bacterial microcompartment. It carries out the reaction 2 cob(II)alamin + reduced [electron-transfer flavoprotein] + 2 ATP + 2 H2O = 2 adenosylcob(III)alamin + oxidized [electron-transfer flavoprotein] + 2 phosphate + 2 diphosphate + 3 H(+). It catalyses the reaction 2 cob(II)inamide + reduced [electron-transfer flavoprotein] + 2 ATP + 2 H2O = 2 adenosylcob(III)inamide + oxidized [electron-transfer flavoprotein] + 2 phosphate + 2 diphosphate + 3 H(+). It participates in amine and polyamine degradation; ethanolamine degradation. Converts cyanocobalamin (CN-B12) to adenosylcobalamin (AdoCbl), the inducer of the eut operon. Is not active on cobinamide nor other intermediates in the adenosylcobalamin synthetic pathway. Allows full induction of the eut operon. Can use ADP, CTP and dATP in place of ATP, and cobinamide in place of cobalamin, none are as efficiently used as ATP and cobalamin. In terms of biological role, expression of the eut operon allows this bacteria to use ethanolamine (EA) as a carbon, nitrogen and energy source. It relies on cobalamin (vitamin B12) both as a cofactor for the ethanolamine ammonia-lyase (EAL) activity and to induce the operon. EA enhances bacterial survival in macrophages in a concentration-dependent manner, suggesting it is an important nutrient during infection. This Salmonella typhimurium (strain LT2 / SGSC1412 / ATCC 700720) protein is Corrinoid adenosyltransferase EutT.